We begin with the raw amino-acid sequence, 462 residues long: MSAEPHPLYRQLPAIDRLLNEPEMAPLLAEYGPVLLADTLRQLQAEAREYIGQFHTLADWCADWPAALRQRLNQRQPALKPVFNLTGTVLHTNLGRAPLAESAIAAVTDAMRSAVTLEYSLEGAGRGHRDRAVADLLCALTGAEDACIVNNNAAAVFLLLTVMAAGKQVVVSRGELVEIGGAFRIPDVMRQAGCELVEVGTTNRTHLKDYRQAINENTGLLMKVHTSNYSIEGFTAAVSEQQLAALGQECSIPTATDLGSGSLVDMTRYGLPAEPMPQQLIAAGVDLVTFSGDKLLGGPQAGIILGKKQWIERLQQHPLKRALRADKMTLAALDATLRLYQQPDRLVEQLPSLRLLTRPASEIAACAQRLLAPLIACYGTDFTLDIESCWSQIGSGSLPVDRLPSWALTFTPKDGRGSTLEALTARWRTLTKPVIGRVADGRLWLDLRCLEDEAALLRELAS.

Lysine 294 is subject to N6-(pyridoxal phosphate)lysine.

This sequence belongs to the SelA family. As to quaternary structure, homodecamer; pentamer of dimers. Binds only one seryl-tRNA(Sec) per dimer. The cofactor is pyridoxal 5'-phosphate.

Its subcellular location is the cytoplasm. The catalysed reaction is L-seryl-tRNA(Sec) + selenophosphate + H(+) = L-selenocysteinyl-tRNA(Sec) + phosphate. Its pathway is aminoacyl-tRNA biosynthesis; selenocysteinyl-tRNA(Sec) biosynthesis; selenocysteinyl-tRNA(Sec) from L-seryl-tRNA(Sec) (bacterial route): step 1/1. In terms of biological role, converts seryl-tRNA(Sec) to selenocysteinyl-tRNA(Sec) required for selenoprotein biosynthesis. The protein is L-seryl-tRNA(Sec) selenium transferase of Yersinia pestis bv. Antiqua (strain Antiqua).